A 622-amino-acid chain; its full sequence is MLQGILETVPSDLKDPISLWFKQDRNPKTIEEVTALCKKSDWNELHKRFDSRIQFGTAGLRSQMQAGFSRMNTLVVIQASQGLATYVRQQFPDNLVAVVGHDHRFHSKEFARATAAAFLLKGFKVHYLNPDHEFVHTPLVPFAVDKLKASVGVMITASHNPKMDNGYKVYYSNGCQIIPPHDHAISDSIDANLEPWANVWDFDDVLNKALKQGKLMYSREEMLKLYLEEVSKNLVEINPLKLEVKAKPWFVYTPMHGVGFDIFSTIVKKTLCLVEGKDYLCVPEQQNPDPSFPTVGFPNPEEKGALDIGINLAEKHDIDLLVANDPDADRFSVAVKDMQSGEWRQLTGNEIGFLFAFYEYQKYKSMDKEFQHVHPLAMLNSTVSSQMIKKMAEIEGFHYEDTLTGFKWIGNRAILLEKKGYYVPFGFEEAIGYMFPAMEHDKDGISASIVFLQAYCKWKIDHNLDPLNVLENGFKKYGVFKEYNGYYVVPNPTVTKDIFDYIRNVYTPEGASYPSSIGEEIEVLYYRDLTTGYQSDTINHKPTLPVDPTSQMITVSARPSNGSENEHIRFTIRGSGTEPKLKVYIEACANEEQRASFLAKLTWNVLRREWFRPDEMNIVTKF.

Substrate contacts are provided by residues Thr57, Arg61, 158–159 (SH), and Lys168. The active-site Phosphoserine intermediate is Ser158. Ser158 serves as a coordination point for Mg(2+). Position 158 is a phosphoserine (Ser158). 3 residues coordinate Mg(2+): Asp325, Asp327, and Asp329. Substrate contacts are provided by residues 329-330 (DR), Thr404, 428-430 (EEA), and Lys442.

The protein belongs to the phosphohexose mutase family. Requires Mg(2+) as cofactor.

The protein localises to the cytoplasm. Its subcellular location is the nucleus. It catalyses the reaction alpha-D-ribose 1-phosphate = D-ribose 5-phosphate. Major phosphoribomutase that converts ribose 1-phosphate to ribose 5-phosphate. Involved in ribose salvage via the pentose phosphate pathway. The chain is Phosphoribomutase from Saccharomyces cerevisiae (strain ATCC 204508 / S288c) (Baker's yeast).